Here is a 287-residue protein sequence, read N- to C-terminus: Putative S-adenosyl-L-methionine-dependent methyltransferase SACE_1742 (287 aa).

Residues D119 and 148-149 (DL) contribute to the S-adenosyl-L-methionine site.

This sequence belongs to the UPF0677 family.

Exhibits S-adenosyl-L-methionine-dependent methyltransferase activity. This is Putative S-adenosyl-L-methionine-dependent methyltransferase SACE_1742 from Saccharopolyspora erythraea (strain ATCC 11635 / DSM 40517 / JCM 4748 / NBRC 13426 / NCIMB 8594 / NRRL 2338).